The following is a 154-amino-acid chain: Prefoldin subunit 2 (154 aa).

Residues 124-139 (IRLMGEDEKPAAKENS) show a composition bias toward basic and acidic residues. A disordered region spans residues 124–154 (IRLMGEDEKPAAKENSEGAGAKASSAGVLVS). Residues 140 to 154 (EGAGAKASSAGVLVS) show a composition bias toward low complexity.

Belongs to the prefoldin subunit beta family. In terms of assembly, heterohexamer of two PFD-alpha type and four PFD-beta type subunits. Component of the PAQosome complex which is responsible for the biogenesis of several protein complexes and which consists of R2TP complex members RUVBL1, RUVBL2, RPAP3 and PIH1D1, URI complex members PFDN2, PFDN6, PDRG1, UXT and URI1 as well as ASDURF, POLR2E and DNAAF10/WDR92. Interacts with URI1; the interaction is phosphorylation-dependent and occurs in a growth-dependent manner.

The protein resides in the nucleus. It localises to the cytoplasm. It is found in the mitochondrion. In terms of biological role, binds specifically to cytosolic chaperonin (c-CPN) and transfers target proteins to it. Binds to nascent polypeptide chain and promotes folding in an environment in which there are many competing pathways for nonnative proteins. The sequence is that of Prefoldin subunit 2 (PFDN2) from Homo sapiens (Human).